We begin with the raw amino-acid sequence, 192 residues long: Casparian strip membrane protein 2 (192 aa).

The Cytoplasmic portion of the chain corresponds to 1-31; sequence MTKDVVVEHGESSKAPLVAAPAASGVGRAAS. Residues 32-52 traverse the membrane as a helical segment; sequence VADVFLRFLAIVGTIASAISM. The Extracellular portion of the chain corresponds to 53 to 79; sequence GTTNETLPFFTQFIQFEAKYSDLPSFT. Residue asparagine 56 is glycosylated (N-linked (GlcNAc...) asparagine). Residues 80-100 traverse the membrane as a helical segment; the sequence is FFVAANAVVCTYLVLSIPLSI. Over 101–112 the chain is Cytoplasmic; it reads VHIVRPRARYSR. Residues 113–133 traverse the membrane as a helical segment; that stretch reads LVLVFFDAAMLTLLTAGASAA. Residues 134-166 lie on the Extracellular side of the membrane; it reads AAIVYLAHKGNVRANWFAICQQFDSFCERISGS. The helical transmembrane segment at 167–187 threads the bilayer; it reads LIGSFAAMVLLIMLIFLSAFA. Residues 188–192 are Cytoplasmic-facing; it reads LARRH.

This sequence belongs to the Casparian strip membrane proteins (CASP) family. In terms of assembly, homodimer and heterodimers.

Its subcellular location is the cell membrane. In terms of biological role, regulates membrane-cell wall junctions and localized cell wall deposition. Required for establishment of the Casparian strip membrane domain (CSD) and the subsequent formation of Casparian strips, a cell wall modification of the root endodermis that determines an apoplastic barrier between the intraorganismal apoplasm and the extraorganismal apoplasm and prevents lateral diffusion. The protein is Casparian strip membrane protein 2 of Panicum virgatum (Blackwell switchgrass).